The sequence spans 57 residues: Defensin-like protein 302 (57 aa).

Cystine bridges form between C19–C39, C26–C44, and C32–C46.

It belongs to the DEFL family.

The chain is Defensin-like protein 302 from Arabidopsis thaliana (Mouse-ear cress).